The chain runs to 360 residues: Chorismate synthase (360 aa).

Residues Arg-48 and Arg-54 each coordinate NADP(+). Residues 125–127, 246–247, Gly-286, 301–305, and Arg-327 each bind FMN; these read RSS, NA, and KPTSS.

The protein belongs to the chorismate synthase family. As to quaternary structure, homotetramer. It depends on FMNH2 as a cofactor.

It carries out the reaction 5-O-(1-carboxyvinyl)-3-phosphoshikimate = chorismate + phosphate. Its pathway is metabolic intermediate biosynthesis; chorismate biosynthesis; chorismate from D-erythrose 4-phosphate and phosphoenolpyruvate: step 7/7. Catalyzes the anti-1,4-elimination of the C-3 phosphate and the C-6 proR hydrogen from 5-enolpyruvylshikimate-3-phosphate (EPSP) to yield chorismate, which is the branch point compound that serves as the starting substrate for the three terminal pathways of aromatic amino acid biosynthesis. This reaction introduces a second double bond into the aromatic ring system. This is Chorismate synthase from Actinobacillus succinogenes (strain ATCC 55618 / DSM 22257 / CCUG 43843 / 130Z).